The chain runs to 88 residues: Large ribosomal subunit protein bL27 (88 aa).

The interval 1 to 24 (MAHKKGTGSTRNGRDSNSKRLGVK) is disordered.

The protein belongs to the bacterial ribosomal protein bL27 family.

This is Large ribosomal subunit protein bL27 from Synechococcus sp. (strain CC9311).